The following is a 327-amino-acid chain: ATPase ASNA1 homolog (327 aa).

26 to 33 serves as a coordination point for ATP; that stretch reads KGGVGKTT. Residue aspartate 57 is part of the active site. ATP-binding residues include glutamate 238 and asparagine 265. Positions 274 and 277 each coordinate Zn(2+).

It belongs to the arsA ATPase family. As to quaternary structure, homodimer.

It is found in the cytoplasm. The protein localises to the endoplasmic reticulum. ATPase required for the post-translational delivery of tail-anchored (TA) proteins to the endoplasmic reticulum. Recognizes and selectively binds the transmembrane domain of TA proteins in the cytosol. This complex then targets to the endoplasmic reticulum by membrane-bound receptors, where the tail-anchored protein is released for insertion. This process is regulated by ATP binding and hydrolysis. ATP binding drives the homodimer towards the closed dimer state, facilitating recognition of newly synthesized TA membrane proteins. ATP hydrolysis is required for insertion. Subsequently, the homodimer reverts towards the open dimer state, lowering its affinity for the membrane-bound receptor, and returning it to the cytosol to initiate a new round of targeting. This Entamoeba histolytica (strain ATCC 30459 / HM-1:IMSS / ABRM) protein is ATPase ASNA1 homolog.